Consider the following 459-residue polypeptide: Mitochondrial distribution and morphology protein 10 (459 aa).

The protein belongs to the MDM10 family. Component of the ER-mitochondria encounter structure (ERMES) or MDM complex, composed of mmm1, mdm10, mdm12 and mdm34. Associates with the mitochondrial outer membrane sorting assembly machinery SAM(core) complex.

The protein localises to the mitochondrion outer membrane. Its function is as follows. Component of the ERMES/MDM complex, which serves as a molecular tether to connect the endoplasmic reticulum and mitochondria. Components of this complex are involved in the control of mitochondrial shape and protein biogenesis and may function in phospholipid exchange. mdm10 is involved in the late assembly steps of the general translocase of the mitochondrial outer membrane (TOM complex). Functions in the tom40-specific route of the assembly of outer membrane beta-barrel proteins, including the association of tom40 with the receptor tom22 and small TOM proteins. Can associate with the SAM(core) complex as well as the mdm12-mmm1 complex, both involved in late steps of the major beta-barrel assembly pathway, that is responsible for biogenesis of all outer membrane beta-barrel proteins. May act as a switch that shuttles between both complexes and channels precursor proteins into the tom40-specific pathway. Plays a role in mitochondrial morphology and in the inheritance of mitochondria. This is Mitochondrial distribution and morphology protein 10 (mdmB) from Aspergillus terreus (strain NIH 2624 / FGSC A1156).